A 1192-amino-acid chain; its full sequence is DNA topoisomerase 2 (1192 aa).

ATP is bound by residues Asn64, Asn95, and 142–149 (GTNGVGLK). Residues Glu438, Asp539, and Asp541 each coordinate Mg(2+). The Topo IIA-type catalytic domain maps to 707–1174 (IPNFLDGMTR…PGASVWLEEI (468 aa)). Tyr800 functions as the O-(5'-phospho-DNA)-tyrosine intermediate in the catalytic mechanism.

The protein belongs to the type II topoisomerase family. It depends on Mg(2+) as a cofactor. Requires Mn(2+) as cofactor. Ca(2+) is required as a cofactor.

The protein resides in the host cytoplasm. It catalyses the reaction ATP-dependent breakage, passage and rejoining of double-stranded DNA.. In terms of biological role, type II topoisomerase. Processively relaxes supercoiled DNA. Displays DNA-supercoiling activity only when associated with the viral histone-like protein. The polypeptide is DNA topoisomerase 2 (African swine fever virus (isolate Pig/Kenya/KEN-50/1950) (ASFV)).